A 355-amino-acid chain; its full sequence is Uroporphyrinogen decarboxylase (355 aa).

Substrate contacts are provided by residues 27-31 (RQAGR), Asp78, Tyr155, Ser210, and His328.

It belongs to the uroporphyrinogen decarboxylase family. In terms of assembly, homodimer.

It localises to the cytoplasm. It catalyses the reaction uroporphyrinogen III + 4 H(+) = coproporphyrinogen III + 4 CO2. It participates in porphyrin-containing compound metabolism; protoporphyrin-IX biosynthesis; coproporphyrinogen-III from 5-aminolevulinate: step 4/4. Its function is as follows. Catalyzes the decarboxylation of four acetate groups of uroporphyrinogen-III to yield coproporphyrinogen-III. The protein is Uroporphyrinogen decarboxylase of Azotobacter vinelandii (strain DJ / ATCC BAA-1303).